The sequence spans 410 residues: ACT domain-containing protein ACR10 (410 aa).

ACT domains are found at residues 22-105 (VITI…SESQ), 114-197 (LLKL…LVGP), and 245-324 (LIHI…VVMM).

Functionally, may bind amino acids. This Arabidopsis thaliana (Mouse-ear cress) protein is ACT domain-containing protein ACR10.